The sequence spans 142 residues: Small ribosomal subunit protein uS12 (142 aa).

A disordered region spans residues 1-44 (MANGKYAARKLKKDRQKHRWSDTDYARRERGLGKKSDPLEGAPQ). Residues 7–18 (AARKLKKDRQKH) show a composition bias toward basic residues. The segment covering 19 to 38 (RWSDTDYARRERGLGKKSDP) has biased composition (basic and acidic residues).

Belongs to the universal ribosomal protein uS12 family. As to quaternary structure, part of the 30S ribosomal subunit.

Functionally, with S4 and S5 plays an important role in translational accuracy. Located at the interface of the 30S and 50S subunits. This chain is Small ribosomal subunit protein uS12, found in Haloarcula marismortui (strain ATCC 43049 / DSM 3752 / JCM 8966 / VKM B-1809) (Halobacterium marismortui).